The following is an 880-amino-acid chain: DNA-directed RNA polymerase subunit Rpo1N (880 aa).

C58, C61, C68, and H71 together coordinate Zn(2+). Residues K88 and 92-95 (EFLK) each bind dsDNA. Zn(2+) is bound by residues C98 and C101. DsDNA is bound at residue K138. C146 and C149 together coordinate Zn(2+). Residues K303, 305-310 (KEGRFR), R323, and Q422 contribute to the dsDNA site. Residues D456, D458, and D460 each coordinate Mg(2+). R573, C575, C580, and H582 together coordinate Zn(2+). DsDNA contacts are provided by residues 812–822 (RTSQSGYMQRR) and Q815.

This sequence belongs to the RNA polymerase beta' chain family. Part of the 13-subunit RNA polymerase complex. Rpo1N and Rpo5 form a cleft which docks Rpo13. Interacts with Rpo8 on the periphery of the clamp head. Requires Mg(2+) as cofactor. The cofactor is Zn(2+).

The protein localises to the cytoplasm. The enzyme catalyses RNA(n) + a ribonucleoside 5'-triphosphate = RNA(n+1) + diphosphate. In terms of biological role, DNA-dependent RNA polymerase (RNAP) catalyzes the transcription of DNA into RNA using the four ribonucleoside triphosphates as substrates. Forms the clamp head domain. This is DNA-directed RNA polymerase subunit Rpo1N from Saccharolobus shibatae (strain ATCC 51178 / DSM 5389 / JCM 8931 / NBRC 15437 / B12) (Sulfolobus shibatae).